Reading from the N-terminus, the 102-residue chain is Glutaredoxin 1 (102 aa).

A Glutaredoxin domain is found at 1–96 (MNKAILHTII…KLLENQPKTT (96 aa)). A disulfide bridge connects residues Cys-17 and Cys-20.

This sequence belongs to the glutaredoxin family. As to quaternary structure, monomer.

The protein resides in the cytoplasm. Its function is as follows. Has a glutathione-disulfide oxidoreductase activity in the presence of NADPH and glutathione reductase. Reduces low molecular weight disulfides and proteins. This chain is Glutaredoxin 1 (grxC1), found in Rickettsia conorii (strain ATCC VR-613 / Malish 7).